A 100-amino-acid polypeptide reads, in one-letter code: Integration host factor subunit alpha (100 aa).

It belongs to the bacterial histone-like protein family. In terms of assembly, heterodimer of an alpha and a beta chain.

Its function is as follows. This protein is one of the two subunits of integration host factor, a specific DNA-binding protein that functions in genetic recombination as well as in transcriptional and translational control. The polypeptide is Integration host factor subunit alpha (Ectopseudomonas mendocina (strain ymp) (Pseudomonas mendocina)).